We begin with the raw amino-acid sequence, 232 residues long: Peptidyl-prolyl cis-trans isomerase FKBP18, chloroplastic (232 aa).

The 119-residue stretch at 108–226 folds into the PPIase FKBP-type domain; that stretch reads GSTAQVHFDC…ELNIELLRVT (119 aa).

It belongs to the FKBP-type PPIase family.

The protein localises to the plastid. It localises to the chloroplast thylakoid lumen. It catalyses the reaction [protein]-peptidylproline (omega=180) = [protein]-peptidylproline (omega=0). In terms of biological role, PPIases accelerate the folding of proteins. It catalyzes the cis-trans isomerization of proline imidic peptide bonds in oligopeptides. In Arabidopsis thaliana (Mouse-ear cress), this protein is Peptidyl-prolyl cis-trans isomerase FKBP18, chloroplastic (FKBP18).